The primary structure comprises 441 residues: C4-dicarboxylate transport protein (441 aa).

Topologically, residues 1–30 (MIIEHSAEVRGKTPLYRHLYVQVLAAIAAG) are cytoplasmic. The helical transmembrane segment at 31–49 (ILLGHFYPDIGTELKPLGD) threads the bilayer. At 50–68 (AFIRLVKMIIAPVIFLTVA) the chain is on the periplasmic side. A helical membrane pass occupies residues 69-87 (TGIAGMTDLAKVGRVAGKA). Over 88 to 99 (MIYFLAFSTLAL) the chain is Cytoplasmic. A helical transmembrane segment spans residues 100–118 (VVGLVVANVVQPGAGMHID). Topologically, residues 119-149 (PASLDAKAVATYAEKAHEQSITGFLMNIIPT) are periplasmic. A helical membrane pass occupies residues 150–168 (TLVGAFAEGDILQVLFISV). Over 169–171 (LFG) the chain is Cytoplasmic. Residues 172-190 (ISLAIVGKKAEPVVDFLQA) traverse the membrane as a helical segment. The Periplasmic segment spans residues 191–209 (LTLPIFRLVAILMKAAPIG). The helical transmembrane segment at 210–228 (AFGAMAFTIGKYGIASIAN) threads the bilayer. The Cytoplasmic portion of the chain corresponds to 229–241 (LAMLIGTFYLTSF). Residues 242-260 (LFVFIVLGAVARYNGFSIL) traverse the membrane as a helical segment. The Periplasmic segment spans residues 261 to 281 (SLIRYIKEELLLVLGTSSSEA). A helical transmembrane segment spans residues 282–300 (ALPGLMNKMEKAGCKRSVV). Over 301 to 320 (GLVIPTGYSFNLDGTNIYMT) the chain is Cytoplasmic. The chain crosses the membrane as a helical span at residues 321–339 (LAALFIAQATDTPLSYGDQ). Residues 340-350 (ILLLLVAMLSS) are Periplasmic-facing. A helical membrane pass occupies residues 351 to 369 (KGAAGITGAGFITLAATLS). Residues 370-378 (VVPSVPVAG) are Cytoplasmic-facing. A helical transmembrane segment spans residues 379 to 398 (MALILGIDRFMSECRALTNF). The Periplasmic portion of the chain corresponds to 399–405 (VGNAVAT). A helical transmembrane segment spans residues 406-424 (IVVAKWEGELDQAQLSAAL). At 425-441 (GGEASVEAIPAVVQPAE) the chain is on the cytoplasmic side.

The protein belongs to the dicarboxylate/amino acid:cation symporter (DAACS) (TC 2.A.23) family.

It is found in the cell inner membrane. In terms of biological role, responsible for the transport of dicarboxylates such as succinate, fumarate, and malate from the periplasm across the inner membrane. This transport system plays an important role in the energy supply of rhizobium-legume symbionts. This chain is C4-dicarboxylate transport protein (dctA), found in Rhizobium meliloti (strain 1021) (Ensifer meliloti).